A 556-amino-acid chain; its full sequence is Transcription factor IIIB 70 kDa subunit (556 aa).

The TFIIB-type zinc-finger motif lies at 8–41 (SSRKCKNCGSTDFVRDISNTTNELICKVCGLVTE). Zn(2+)-binding residues include Cys-12, Cys-15, Cys-33, and Cys-36. 2 tandem repeats follow at residues 98 to 174 (LKAV…TFLK) and 193 to 272 (IQHF…RLNE). An interaction with TBP and with the Pol III subunit C34 region spans residues 98 to 272 (LKAVSYALNI…EETLQQRLNE (175 aa)). The tract at residues 284-556 (KEFRDDETEV…DAINGLFGQK (273 aa)) is interaction with TBP. Disordered regions lie at residues 287 to 309 (RDDETEVNEGERSAESKPPSFDK) and 477 to 501 (ADLASGNTSLRKKRSKRTNRNQSSA). Residues 295 to 309 (EGERSAESKPPSFDK) are compositionally biased toward basic and acidic residues. Residues 486–495 (LRKKRSKRTN) are compositionally biased toward basic residues.

The protein belongs to the TFIIB family. TFIIIB comprises the TATA-binding protein (TBP), the B-related factor (BRF) and a 70 kDa polypeptide.

The protein localises to the nucleus. Functionally, general activator of RNA polymerase III transcription. Interacts with TBP. Binds to Pol III subunit C34 and to the TAU135 component of TFIIIC. This is Transcription factor IIIB 70 kDa subunit (TDS4) from Kluyveromyces lactis (strain ATCC 8585 / CBS 2359 / DSM 70799 / NBRC 1267 / NRRL Y-1140 / WM37) (Yeast).